Consider the following 520-residue polypeptide: MSNKCDVVVVGGGISGMAAAKLLHDSGLNVVVLEARDRVGGRTYTLRNQKVKYVDLGGSYVGPTQNRILRLAKELGLETYKVNEVERLIHHVKGKSYPFRGPFPPVWNPITYLDHNNFWRTMDDMGREIPSDAPWKAPLAEEWDNMTMKELLDKLCWTESAKQLATLFVNLCVTAETHEVSALWFLWYVKQCGGTTRIISTTNGGQERKFVGGSGQVSERIMDLLGDRVKLERPVIYIDQTRENVLVETLNHEMYEAKYVISAIPPTLGMKIHFNPPLPMMRNQMITRVPLGSVIKCIVYYKEPFWRKKDYCGTMIIDGEEAPVAYTLDDTKPEGNYAAIMGFILAHKARKLARLTKEERLKKLCELYAKVLGSLEALEPVHYEEKNWCEEQYSGGCYTTYFPPGILTQYGRVLRQPVDRIYFAGTETATHWSGYMEGAVEAGERAAREILHAMGKIPEDEIWQSEPESVDVPAQPITTTFLERHLPSVPGLLRLIGLTTIFSATALGFLAHKRGLLVRV.

An N-acetylserine modification is found at S2. The Cytoplasmic portion of the chain corresponds to 2-489 (SNKCDVVVVG…TFLERHLPSV (488 aa)). K52 carries the post-translational modification N6-acetyllysine. S-8alpha-FAD cysteine is present on C397. The helical; Anchor for type IV membrane protein transmembrane segment at 490–516 (PGLLRLIGLTTIFSATALGFLAHKRGL) threads the bilayer. At 517 to 520 (LVRV) the chain is on the mitochondrial intermembrane side.

In terms of assembly, monomer, homo- or heterodimer (containing two subunits of similar size). Each subunit contains a covalently bound flavin. Enzymatically active as monomer. It depends on FAD as a cofactor.

Its subcellular location is the mitochondrion outer membrane. It carries out the reaction a secondary aliphatic amine + O2 + H2O = a primary amine + an aldehyde + H2O2. The enzyme catalyses (R)-adrenaline + O2 + H2O = (R)-3,4-dihydroxymandelaldehyde + methylamine + H2O2. The catalysed reaction is a primary methyl amine + O2 + H2O = an aldehyde + H2O2 + NH4(+). It catalyses the reaction benzylamine + O2 + H2O = benzaldehyde + H2O2 + NH4(+). It carries out the reaction dopamine + O2 + H2O = 3,4-dihydroxyphenylacetaldehyde + H2O2 + NH4(+). The enzyme catalyses tyramine + O2 + H2O = (4-hydroxyphenyl)acetaldehyde + H2O2 + NH4(+). The catalysed reaction is (R)-noradrenaline + O2 + H2O = (R)-3,4-dihydroxymandelaldehyde + H2O2 + NH4(+). It catalyses the reaction 2-phenylethylamine + O2 + H2O = 2-phenylacetaldehyde + H2O2 + NH4(+). It carries out the reaction N-acetylputrescine + O2 + H2O = 4-acetamidobutanal + H2O2 + NH4(+). With respect to regulation, inhibited by deprenyl. Catalyzes the oxidative deamination of primary and some secondary amines such as neurotransmitters, and exogenous amines including the tertiary amine, neurotoxin 1-methyl-4-phenyl-1,2,3,6-tetrahydropyridine (MPTP), with concomitant reduction of oxygen to hydrogen peroxide and participates in the metabolism of neuroactive and vasoactive amines in the central nervous system and peripheral tissues. Preferentially degrades benzylamine and phenylethylamine. This is Amine oxidase [flavin-containing] B from Homo sapiens (Human).